Here is a 258-residue protein sequence, read N- to C-terminus: Global transcriptional regulator CodY (258 aa).

The segment at 1–156 (MSSLLEKTRQ…SATIIGLEIL (156 aa)) is GAF domain. The segment at residues 204 to 223 (ASKIADKVGITRSVIVNALR) is a DNA-binding region (H-T-H motif).

The protein belongs to the CodY family.

It localises to the cytoplasm. Functionally, DNA-binding global transcriptional regulator which is involved in the adaptive response to starvation and acts by directly or indirectly controlling the expression of numerous genes in response to nutrient availability. During rapid exponential growth, CodY is highly active and represses genes whose products allow adaptation to nutrient depletion. This Clostridium tetani (strain Massachusetts / E88) protein is Global transcriptional regulator CodY.